The chain runs to 180 residues: Protein PHLOEM PROTEIN 2-LIKE A9 (180 aa).

Residues 1–21 (MSSQKSSHHKADSKMEQDNNR) are disordered. Residues 9 to 21 (HKADSKMEQDNNR) show a composition bias toward basic and acidic residues.

This is Protein PHLOEM PROTEIN 2-LIKE A9 (PP2A9) from Arabidopsis thaliana (Mouse-ear cress).